The primary structure comprises 430 residues: Glutamate-1-semialdehyde 2,1-aminomutase 2 (430 aa).

Lys-269 is modified (N6-(pyridoxal phosphate)lysine).

It belongs to the class-III pyridoxal-phosphate-dependent aminotransferase family. HemL subfamily. Homodimer. Pyridoxal 5'-phosphate is required as a cofactor.

It localises to the cytoplasm. The catalysed reaction is (S)-4-amino-5-oxopentanoate = 5-aminolevulinate. The protein operates within porphyrin-containing compound metabolism; protoporphyrin-IX biosynthesis; 5-aminolevulinate from L-glutamyl-tRNA(Glu): step 2/2. The chain is Glutamate-1-semialdehyde 2,1-aminomutase 2 from Bacillus pumilus (strain SAFR-032).